The chain runs to 1019 residues: MYNRVYKERQEIRTIQGLEASGQFQTASNITDIQIYSINVTPTMSKGGETGETQLRRLMYLSASTEPEKCNAEYLADMAHVATLRNKAIGVIRFLLYSSPFFFQVIEGTDEDLDFLFAKISADPRHERCIVLANGPCTGRMYGEWHMKDSHIDNITNNPAIKTILFQIARSFTSMWSYLPKNAANMLLLGKNPNKQGPEPRSVVLTFIYLVEFSSILAHPGLTEQCADILAAFVEASVRNCEGTWGLVAKFITGTCVAYWPINRAEDALVGLQQLSEDLAVLRSYQPPGSALSRIYSRRGVHYGRALLCNAGFRKADFTLLGDCINTASRITSLSVKLKVPLLLSFEVRCLLGDEMREELERSALHKVKGRDKPVQVYQFNAPELDSALVRAKIEQFNPGRYRALCPVKPYESLHPAQRPPIFDDTPRENQPKLSQVQRRDSLVDRLSLIAKLAFPSSMMAGGEGQLITLTYISQAAHPMSRFDLASIQRIAFARNESSNITGSLLYVSGLFVQTLDDPKGAVESLYLKIRQDKRHKDVVAVFMAPIDERVYGTPLDMTSATEEMLATFPPLQDVLSQLAKSFISLETYVPSTVVRYLTAGNNPRNLQPVSVEVVMLATDICSFTPLSEKCSLTEVWTICNTFIDACTSAICNEGGEVIKLIGDCVTAYFAPTGADNAVHACQEIVSFSAQLRDAFHDVLDCRSVVACGVGLDFGQVIMAQCGSLRLTEFVVAGEVSARVMAVEALTREAGRAIVITEPVSDRLSAKLRDTGIVPCQEGLHAVLLWYPGPRMGIGCANHQEDHLRVPRRPGPGRHEEGGRRHQRPGPGRPRRGHPFLPQGSTTRPHQFSVQLHPLPKLGTGSSDGGIGVSLHVYSAGRYRQQLHRRQIAAGGQRRSVGPGQDVARATRAHACDAGHQAPDQPANAQYERQFRGGQQRWRTCGIVHSNAFVTGVGLVQQPWLDEGHRPEAPHQSLHPGPGDPSEQHPHRPNRATEPGLLVARQPAVCLHRPEGFAQICTF.

Positions 55–148 (LRRLMYLSAS…GRMYGEWHMK (94 aa)) constitute a BLUF 1 domain. Residues 204–332 (VLTFIYLVEF…DCINTASRIT (129 aa)) enclose the Guanylate cyclase 1 domain. Residues 467 to 559 (LITLTYISQA…RVYGTPLDMT (93 aa)) enclose the BLUF 2 domain. The 130-residue stretch at 615–744 (VMLATDICSF…EVSARVMAVE (130 aa)) folds into the Guanylate cyclase 2 domain. 3 disordered regions span residues 801 to 846 (EDHL…TRPH), 887 to 923 (QIAAGGQRRSVGPGQDVARATRAHACDAGHQAPDQPA), and 963 to 993 (EGHRPEAPHQSLHPGPGDPSEQHPHRPNRAT). Basic residues predominate over residues 821–834 (RHQRPGPGRPRRGH).

The protein belongs to the adenylyl cyclase class-4/guanylyl cyclase family. Heterotetramer of two alpha and two beta subunits.

It is found in the cell projection. Its subcellular location is the cilium. The protein localises to the flagellum. The chain is Photoactivated adenylate cyclase subunit alpha-like protein ST- from Euglena gracilis.